The primary structure comprises 110 residues: MKRILGALLGLLSAQVCCVRGIQVEQSPPDLILQEGANSTLRCNFSDSVNNLQWFHQNPWGQLINLFYIPSGTKQNGRLSATTVATERYSLLYISSSQTTDSGVYFCAVE.

The first 21 residues, 1 to 21 (MKRILGALLGLLSAQVCCVRG), serve as a signal peptide directing secretion. In terms of domain architecture, Ig-like spans 22 to 110 (IQVEQSPPDL…DSGVYFCAVE (89 aa)). N-linked (GlcNAc...) asparagine glycosylation is found at asparagine 38 and asparagine 44. Residues cysteine 43 and cysteine 107 are joined by a disulfide bond.

As to quaternary structure, alpha-beta TR is a heterodimer composed of an alpha and beta chain; disulfide-linked. The alpha-beta TR is associated with the transmembrane signaling CD3 coreceptor proteins to form the TR-CD3 (TcR or TCR). The assembly of alpha-beta TR heterodimers with CD3 occurs in the endoplasmic reticulum where a single alpha-beta TR heterodimer associates with one CD3D-CD3E heterodimer, one CD3G-CD3E heterodimer and one CD247 homodimer forming a stable octameric structure. CD3D-CD3E and CD3G-CD3E heterodimers preferentially associate with TR alpha and TR beta chains, respectively. The association of the CD247 homodimer is the last step of TcR assembly in the endoplasmic reticulum and is required for transport to the cell surface.

The protein localises to the cell membrane. Functionally, v region of the variable domain of T cell receptor (TR) alpha chain that participates in the antigen recognition. Alpha-beta T cell receptors are antigen specific receptors which are essential to the immune response and are present on the cell surface of T lymphocytes. Recognize peptide-major histocompatibility (MH) (pMH) complexes that are displayed by antigen presenting cells (APC), a prerequisite for efficient T cell adaptive immunity against pathogens. Binding of alpha-beta TR to pMH complex initiates TR-CD3 clustering on the cell surface and intracellular activation of LCK that phosphorylates the ITAM motifs of CD3G, CD3D, CD3E and CD247 enabling the recruitment of ZAP70. In turn ZAP70 phosphorylates LAT, which recruits numerous signaling molecules to form the LAT signalosome. The LAT signalosome propagates signal branching to three major signaling pathways, the calcium, the mitogen-activated protein kinase (MAPK) kinase and the nuclear factor NF-kappa-B (NF-kB) pathways, leading to the mobilization of transcription factors that are critical for gene expression and essential for T cell growth and differentiation. The T cell repertoire is generated in the thymus, by V-(D)-J rearrangement. This repertoire is then shaped by intrathymic selection events to generate a peripheral T cell pool of self-MH restricted, non-autoaggressive T cells. Post-thymic interaction of alpha-beta TR with the pMH complexes shapes TR structural and functional avidity. The chain is T cell receptor alpha variable 22 from Homo sapiens (Human).